The chain runs to 160 residues: Lymphocyte antigen 96 (160 aa).

An N-terminal signal peptide occupies residues 1–16; it reads MLPFILFSTLLPLIFT. Disulfide bonds link Cys-25–Cys-51, Cys-37–Cys-148, and Cys-95–Cys-105. Asn-26, Asn-77, and Asn-101 each carry an N-linked (GlcNAc...) asparagine glycan. The segment at 119 to 123 is interaction with lipopolysaccharide; sequence FSFKG. N-linked (GlcNAc...) asparagine glycosylation is present at Asn-150.

As to quaternary structure, heterogeneous homomer formed from homodimers; disulfide-linked. Belongs to the lipopolysaccharide (LPS) receptor, a multi-protein complex containing at least CD14, LY96 and TLR4. Binds to the extracellular domains of TLR2 and TLR4. Ligand binding induces interaction with TLR4 and oligomerization of the complex. Post-translationally, N-glycosylated.

The protein localises to the secreted. Its subcellular location is the extracellular space. Its function is as follows. Binds bacterial lipopolysaccharide (LPS). Cooperates with TLR4 in the innate immune response to bacterial lipopolysaccharide (LPS), and with TLR2 in the response to cell wall components from Gram-positive and Gram-negative bacteria. Enhances TLR4-dependent activation of NF-kappa-B. Cells expressing both LY96 and TLR4, but not TLR4 alone, respond to LPS. In Cricetulus griseus (Chinese hamster), this protein is Lymphocyte antigen 96 (LY96).